A 437-amino-acid chain; its full sequence is Peptidyl-prolyl cis-trans isomerase CYP38, chloroplastic (437 aa).

A chloroplast-targeting transit peptide spans 1-36 (MAAAFASLPTFSVVNSSRFPRRRIGFSCSKKPLEVR). A thylakoid-targeting transit peptide spans 37 to 92 (CSSGNTRYTKQRGAFTSLKECAISLALSVGLMVSVPSIALPPNAHAVANPVIPDVS). One can recognise a PPIase cyclophilin-type domain in the interval 245 to 437 (VKIKDNPNIE…LANPSYKIAG (193 aa)).

As to expression, ubiquitous. Lower levels of expression in roots.

Its subcellular location is the plastid. It localises to the chloroplast thylakoid lumen. It catalyses the reaction [protein]-peptidylproline (omega=180) = [protein]-peptidylproline (omega=0). In terms of biological role, required for the assembly and stabilization of PSII, but has no PPIases activity. The sequence is that of Peptidyl-prolyl cis-trans isomerase CYP38, chloroplastic (CYP38) from Arabidopsis thaliana (Mouse-ear cress).